The sequence spans 162 residues: MEIKEIKVGIADMNTAGSPHRLITIGLGSCVGIALYDKVKGIGGLAHIMLPDSTQFSNIKNPVKFADLAVPLLIKDLEKLGVNKRNLKAKIAGGASMFNFSDKSMIMDIGNRNSAAVKKILEKCSVPILSEDLGGNKGRTMIFDTSQGGVKIRTVGMGIKEI.

The protein belongs to the CheD family.

It catalyses the reaction L-glutaminyl-[protein] + H2O = L-glutamyl-[protein] + NH4(+). Probably deamidates glutamine residues to glutamate on methyl-accepting chemotaxis receptors (MCPs), playing an important role in chemotaxis. The chain is Probable chemoreceptor glutamine deamidase CheD from Clostridium kluyveri (strain ATCC 8527 / DSM 555 / NBRC 12016 / NCIMB 10680 / K1).